A 293-amino-acid chain; its full sequence is AKT-interacting protein homolog A (293 aa).

Over residues 1–11 (MNPFWNMSSAS) the composition is skewed to polar residues. Positions 1 to 45 (MNPFWNMSSASVRKRSENDEKISTGDQKISPPRSSSAKKQLPPIP) are disordered. Residues 14–23 (KRSENDEKIS) show a composition bias toward basic and acidic residues. Residues 24–38 (TGDQKISPPRSSSAK) are compositionally biased toward polar residues. One can recognise a UBC core domain in the interval 75-223 (YLEYSLLAEF…VVDSVKLCNS (149 aa)). The span at 256 to 266 (AQKKKSEEQSK) shows a compositional bias: basic and acidic residues. The segment at 256–293 (AQKKKSEEQSKGLHVSGLSWVKPGSVLPFSKEENSLQT) is disordered.

This sequence belongs to the ubiquitin-conjugating enzyme family. FTS subfamily.

The protein resides in the cytoplasm. It localises to the cell membrane. May function to promote vesicle trafficking and/or fusion. May also regulate apoptosis. The polypeptide is AKT-interacting protein homolog A (aktip-a) (Xenopus laevis (African clawed frog)).